A 285-amino-acid chain; its full sequence is Acrosomal protein SP-10 (285 aa).

The first 21 residues, 1 to 21 (MNMFLLLMSLYLLGSARGTSG), serve as a signal peptide directing secretion. Residues 64-200 (TLSEHGSSEH…GEQPSGAPIS (137 aa)) form a disordered region. 19 repeat units span residues 66 to 70 (SEHGS), 71 to 75 (SEHGS), 85 to 89 (PGEHA), 91 to 95 (SEHAS), 110 to 114 (VGEQP), 115 to 119 (SGEQP), 120 to 124 (SGEHL), 125 to 129 (SGEQS), 130 to 134 (LGEHA), 135 to 139 (SGEQP), 145 to 149 (SGEHA), 150 to 154 (SGEQP), 155 to 159 (SGEHA), 160 to 164 (SGEQP), 165 to 169 (SGEQP), 170 to 174 (SGEHA), 175 to 179 (SGEQS), 180 to 184 (LGEHA), and 190 to 194 (SGEQP). The interval 66–95 (SEHGSSEHGSREHTVAEHTPGEHAESEHAS) is 3 X 5 AA repeats of S-E-H-[GA]-A. Over residues 69–95 (GSSEHGSREHTVAEHTPGEHAESEHAS) the composition is skewed to basic and acidic residues. A 7 X 5 AA repeats of S-G-E-H-[AL] region spans residues 85 to 184 (PGEHAESEHA…SGEQSLGEHA (100 aa)). The interval 110-194 (VGEQPSGEQP…LSEKPSGEQP (85 aa)) is 9 X 5 AA repeats of [SV]-G-E-Q-[PSA]. The N-linked (GlcNAc...) asparagine glycan is linked to Asn278.

In terms of tissue distribution, testis.

Its subcellular location is the cytoplasmic vesicle. It is found in the secretory vesicle. The protein localises to the acrosome. This chain is Acrosomal protein SP-10 (ACRV1), found in Papio hamadryas (Hamadryas baboon).